Here is a 384-residue protein sequence, read N- to C-terminus: Spermidine/putrescine import ATP-binding protein PotA (384 aa).

The ABC transporter domain occupies 6-238 (IAFKNVSKVF…PINHFVATFI (233 aa)). Position 40 to 47 (40 to 47 (GASGSGKS)) interacts with ATP.

This sequence belongs to the ABC transporter superfamily. Spermidine/putrescine importer (TC 3.A.1.11.1) family. In terms of assembly, the complex is composed of two ATP-binding proteins (PotA), two transmembrane proteins (PotB and PotC) and a solute-binding protein (PotD).

The protein localises to the cell membrane. The catalysed reaction is ATP + H2O + polyamine-[polyamine-binding protein]Side 1 = ADP + phosphate + polyamineSide 2 + [polyamine-binding protein]Side 1.. Part of the ABC transporter complex PotABCD involved in spermidine/putrescine import. Responsible for energy coupling to the transport system. In Streptococcus agalactiae serotype Ia (strain ATCC 27591 / A909 / CDC SS700), this protein is Spermidine/putrescine import ATP-binding protein PotA.